The following is a 236-amino-acid chain: Uridylate kinase (236 aa).

10 to 13 (KLSG) contributes to the ATP binding site. A UMP-binding site is contributed by G52. Positions 53 and 57 each coordinate ATP. UMP-binding positions include D72 and 133-140 (TGNPFFTT). Positions 160, 166, and 169 each coordinate ATP.

The protein belongs to the UMP kinase family. Homohexamer.

It localises to the cytoplasm. The enzyme catalyses UMP + ATP = UDP + ADP. Its pathway is pyrimidine metabolism; CTP biosynthesis via de novo pathway; UDP from UMP (UMPK route): step 1/1. Inhibited by UTP. Its function is as follows. Catalyzes the reversible phosphorylation of UMP to UDP. In Cupriavidus metallidurans (strain ATCC 43123 / DSM 2839 / NBRC 102507 / CH34) (Ralstonia metallidurans), this protein is Uridylate kinase.